A 339-amino-acid polypeptide reads, in one-letter code: uncharacterized protein (339 aa).

2 VOC domains span residues 2-127 (EFDY…VRSE) and 141-276 (TIDH…CLEI). Fe cation is bound by residues histidine 144, histidine 222, and glutamate 306.

The protein belongs to the 4HPPD family. It depends on Fe cation as a cofactor.

This is an uncharacterized protein from Synechocystis sp. (strain ATCC 27184 / PCC 6803 / Kazusa).